The sequence spans 119 residues: Small ribosomal subunit protein uS13 (119 aa).

Positions 92–119 (RRGLPVRGQRTKTNARTRKGPRKAIRAR) are disordered.

It belongs to the universal ribosomal protein uS13 family. In terms of assembly, part of the 30S ribosomal subunit. Forms a loose heterodimer with protein S19. Forms two bridges to the 50S subunit in the 70S ribosome.

In terms of biological role, located at the top of the head of the 30S subunit, it contacts several helices of the 16S rRNA. In the 70S ribosome it contacts the 23S rRNA (bridge B1a) and protein L5 of the 50S subunit (bridge B1b), connecting the 2 subunits; these bridges are implicated in subunit movement. Contacts the tRNAs in the A and P-sites. In Nitrosomonas eutropha (strain DSM 101675 / C91 / Nm57), this protein is Small ribosomal subunit protein uS13.